We begin with the raw amino-acid sequence, 258 residues long: MKIAILYREEREKEGKFLKEKISKEHEVIEFGEANAPGRVTADLIVVVGGDGTVLKAAKKAADGTPMVGFKAGRLGFLTSYTLDEIDRFLEDLRNWNFREETRWFIQIESELGNHLALNDVTLERDLSGKMVEIEVEVEHHSSMWFFADGVVISTPTGSTAYSLSIGGPIIFPECEVLEISPIAPQFFLTRSVVIPSNFKVVVESQRDINMLVDGVLTGKTKRIEVKKSRRYVRILRPPEYDYVTVIRDKLGYGRRIE.

Asp51 acts as the Proton acceptor in catalysis. NAD(+) contacts are provided by residues 51-52 (DG), Lys56, 119-120 (ND), Lys130, Asp149, 160-165 (TAYSLS), and Ala184.

The protein belongs to the NAD kinase family. Requires a divalent metal cation as cofactor.

It localises to the cytoplasm. The enzyme catalyses NAD(+) + ATP = ADP + NADP(+) + H(+). Its function is as follows. Involved in the regulation of the intracellular balance of NAD and NADP, and is a key enzyme in the biosynthesis of NADP. Catalyzes specifically the phosphorylation on 2'-hydroxyl of the adenosine moiety of NAD to yield NADP. The protein is NAD kinase of Thermotoga petrophila (strain ATCC BAA-488 / DSM 13995 / JCM 10881 / RKU-1).